Reading from the N-terminus, the 80-residue chain is Acyl carrier protein (80 aa).

In terms of domain architecture, Carrier spans 4–79; the sequence is EAILEKVRSI…DAVKYIEDKQ (76 aa). Serine 39 carries the O-(pantetheine 4'-phosphoryl)serine modification.

The protein belongs to the acyl carrier protein (ACP) family. 4'-phosphopantetheine is transferred from CoA to a specific serine of apo-ACP by AcpS. This modification is essential for activity because fatty acids are bound in thioester linkage to the sulfhydryl of the prosthetic group.

Its subcellular location is the cytoplasm. Its pathway is lipid metabolism; fatty acid biosynthesis. Functionally, carrier of the growing fatty acid chain in fatty acid biosynthesis. In Prochlorococcus marinus (strain MIT 9313), this protein is Acyl carrier protein.